Consider the following 252-residue polypeptide: Chitooligosaccharide deacetylase (252 aa).

Mg(2+) is bound by residues His-61 and His-125.

Belongs to the YdjC deacetylase family. ChbG subfamily. Homodimer. Mg(2+) is required as a cofactor.

The protein resides in the cytoplasm. It catalyses the reaction N,N'-diacetylchitobiose + H2O = N-acetyl-beta-D-glucosaminyl-(1-&gt;4)-D-glucosamine + acetate. The catalysed reaction is diacetylchitobiose-6'-phosphate + H2O = N'-monoacetylchitobiose-6'-phosphate + acetate. Its pathway is glycan degradation; chitin degradation. In terms of biological role, involved in the degradation of chitin. ChbG is essential for growth on the acetylated chitooligosaccharides chitobiose and chitotriose but is dispensable for growth on cellobiose and chitosan dimer, the deacetylated form of chitobiose. Deacetylation of chitobiose-6-P and chitotriose-6-P is necessary for both the activation of the chb promoter by the regulatory protein ChbR and the hydrolysis of phosphorylated beta-glucosides by the phospho-beta-glucosidase ChbF. Catalyzes the removal of only one acetyl group from chitobiose-6-P to yield monoacetylchitobiose-6-P, the inducer of ChbR and the substrate of ChbF. In Escherichia coli O139:H28 (strain E24377A / ETEC), this protein is Chitooligosaccharide deacetylase.